A 196-amino-acid chain; its full sequence is Large ribosomal subunit protein uL5 (196 aa).

It belongs to the universal ribosomal protein uL5 family. Part of the 50S ribosomal subunit; part of the 5S rRNA/L5/L18/L25 subcomplex. Contacts the 5S rRNA and the P site tRNA. Forms a bridge to the 30S subunit in the 70S ribosome.

In terms of biological role, this is one of the proteins that bind and probably mediate the attachment of the 5S RNA into the large ribosomal subunit, where it forms part of the central protuberance. In the 70S ribosome it contacts protein S13 of the 30S subunit (bridge B1b), connecting the 2 subunits; this bridge is implicated in subunit movement. Contacts the P site tRNA; the 5S rRNA and some of its associated proteins might help stabilize positioning of ribosome-bound tRNAs. The protein is Large ribosomal subunit protein uL5 of Chlorobium phaeobacteroides (strain BS1).